A 264-amino-acid chain; its full sequence is Glutamate racemase (264 aa).

Substrate contacts are provided by residues 10–11 and 42–43; these read DS and YG. The active-site Proton donor/acceptor is the C73. 74 to 75 lines the substrate pocket; sequence NT. C183 serves as the catalytic Proton donor/acceptor. 184–185 is a substrate binding site; sequence TH.

The protein belongs to the aspartate/glutamate racemases family.

It catalyses the reaction L-glutamate = D-glutamate. It functions in the pathway cell wall biogenesis; peptidoglycan biosynthesis. Provides the (R)-glutamate required for cell wall biosynthesis. This is Glutamate racemase from Streptococcus pyogenes serotype M6 (strain ATCC BAA-946 / MGAS10394).